The primary structure comprises 182 residues: Large ribosomal subunit protein uL5 (182 aa).

This sequence belongs to the universal ribosomal protein uL5 family. As to quaternary structure, part of the 50S ribosomal subunit; part of the 5S rRNA/L5/L18/L25 subcomplex. Contacts the 5S rRNA and the P site tRNA. Forms a bridge to the 30S subunit in the 70S ribosome.

Its function is as follows. This is one of the proteins that bind and probably mediate the attachment of the 5S RNA into the large ribosomal subunit, where it forms part of the central protuberance. In the 70S ribosome it contacts protein S13 of the 30S subunit (bridge B1b), connecting the 2 subunits; this bridge is implicated in subunit movement. Contacts the P site tRNA; the 5S rRNA and some of its associated proteins might help stabilize positioning of ribosome-bound tRNAs. This chain is Large ribosomal subunit protein uL5, found in Nostoc punctiforme (strain ATCC 29133 / PCC 73102).